The chain runs to 130 residues: YopE regulator (130 aa).

Functionally, positive regulator of YopE. The protein is YopE regulator (yerA) of Yersinia enterocolitica serotype O:8 / biotype 1B (strain NCTC 13174 / 8081).